Consider the following 158-residue polypeptide: Secreted frizzled-related protein 1 (158 aa).

Residues 1-34 form the FZ domain; the sequence is VRDSCEPVMQFFGFYWPEMLKCDKFPEGDVCIAM. Residue asparagine 38 is glycosylated (N-linked (GlcNAc...) asparagine). 2 disulfides stabilise this stretch: cysteine 51–cysteine 121 and cysteine 68–cysteine 123. The 108-residue stretch at 51–158 folds into the NTR domain; it reads CPPCDNELKS…IHKWDKKNKE (108 aa).

It belongs to the secreted frizzled-related protein (sFRP) family. In terms of assembly, interacts with WNT4, WNT1, WNT2, WNT8, MYOC and FRZD6.

It is found in the secreted. In terms of biological role, soluble frizzled-related proteins (sFRPS) function as modulators of Wnt signaling through direct interaction with Wnts. They have a role in regulating cell growth and differentiation in specific cell types. SFRP1 decreases intracellular beta-catenin levels. Has antiproliferative effects on vascular cells, in vitro and in vivo, and can induce, in vivo, an angiogenic response. In vascular cell cycle, delays the G1 phase and entry into the S phase. In kidney development, inhibits tubule formation and bud growth in metanephroi. Inhibits WNT1/WNT4-mediated TCF-dependent transcription. The sequence is that of Secreted frizzled-related protein 1 (Sfrp1) from Rattus norvegicus (Rat).